A 64-amino-acid chain; its full sequence is Large ribosomal subunit protein bL35 (64 aa).

Residues 1 to 24 (MPKMKSHRGACKRFKKTASGKVKR) show a composition bias toward basic residues. A disordered region spans residues 1–64 (MPKMKSHRGA…EKQIKRMILA (64 aa)). Over residues 25–35 (ERMYGSHNLEK) the composition is skewed to basic and acidic residues. A compositionally biased stretch (basic residues) spans 36–45 (KNRKRTRRLH).

Belongs to the bacterial ribosomal protein bL35 family.

The chain is Large ribosomal subunit protein bL35 from Prosthecochloris aestuarii (strain DSM 271 / SK 413).